The sequence spans 508 residues: Histidine ammonia-lyase (508 aa).

The 5-imidazolinone (Ala-Gly) cross-link spans 141 to 143 (ASG). Ser142 is modified (2,3-didehydroalanine (Ser)).

Belongs to the PAL/histidase family. Contains an active site 4-methylidene-imidazol-5-one (MIO), which is formed autocatalytically by cyclization and dehydration of residues Ala-Ser-Gly.

Its subcellular location is the cytoplasm. The enzyme catalyses L-histidine = trans-urocanate + NH4(+). It participates in amino-acid degradation; L-histidine degradation into L-glutamate; N-formimidoyl-L-glutamate from L-histidine: step 1/3. This chain is Histidine ammonia-lyase, found in Geobacillus sp. (strain WCH70).